Here is an 85-residue protein sequence, read N- to C-terminus: COMM domain-containing protein 6 (85 aa).

Position 1 is an N-acetylmethionine (Met-1). One can recognise a COMM domain in the interval 18 to 85 (QLIDFEWKLG…KEIAAIIETV (68 aa)).

The protein belongs to the COMM domain-containing protein 6 family. As to quaternary structure, component of the commander complex consisting of the CCC subcomplex and the retriever subcomplex. Component of the CCC (COMMD/CCDC22/CCDC93) subcomplex consisting of COMMD1, COMMD2, COMMD3, COMMD4, COMMD5, COMMD6, COMMD7, COMMD8, COMMD9, COMMD10, CCDC22 and CCDC93; within the complex forms a heterodimer with COMMD1. May form a homodimer with isoform 1. Interacts with RELA, RELB, NFKB1/p105. Does not interact with NFKBIB. Interacts with CCDC22, CCDC93, SCNN1B, CUL4A.

It is found in the nucleus. The protein localises to the cytoplasm. In terms of biological role, scaffold protein in the commander complex that is essential for endosomal recycling of transmembrane cargos; the commander complex is composed of the CCC subcomplex and the retriever subcomplex. May modulate activity of cullin-RING E3 ubiquitin ligase (CRL) complexes. Down-regulates activation of NF-kappa-B. Inhibits TNF-induced NFKB1 activation. The sequence is that of COMM domain-containing protein 6 (COMMD6) from Bos taurus (Bovine).